Reading from the N-terminus, the 412-residue chain is Mannose-6-phosphate isomerase (412 aa).

Positions 99, 101, 126, and 265 each coordinate Zn(2+). The active site involves Arg-284.

The protein belongs to the mannose-6-phosphate isomerase type 1 family. The cofactor is Zn(2+).

It is found in the cytoplasm. The protein resides in the nucleus. The catalysed reaction is D-mannose 6-phosphate = D-fructose 6-phosphate. It functions in the pathway nucleotide-sugar biosynthesis; GDP-alpha-D-mannose biosynthesis; alpha-D-mannose 1-phosphate from D-fructose 6-phosphate: step 1/2. Involved in the synthesis of the GDP-mannose and dolichol-phosphate-mannose required for a number of critical mannosyl transfer reactions. This is Mannose-6-phosphate isomerase (pmi40) from Schizosaccharomyces pombe (strain 972 / ATCC 24843) (Fission yeast).